The following is a 489-amino-acid chain: Rhamnulokinase (489 aa).

13–17 contacts ATP; the sequence is ASSGR. Residues C68 and C222 are joined by a disulfide bond. Residues G83 and 236 to 238 contribute to the substrate site; that span reads HDT. Catalysis depends on D237, which acts as the Proton acceptor. T259 serves as a coordination point for ATP. Residue N296 coordinates substrate. Residue Q304 participates in ATP binding. Cysteines 353 and 370 form a disulfide. G402 contributes to the ATP binding site. C413 and C417 form a disulfide bridge.

Belongs to the rhamnulokinase family. Monomer. Mg(2+) is required as a cofactor.

The enzyme catalyses L-rhamnulose + ATP = L-rhamnulose 1-phosphate + ADP + H(+). It functions in the pathway carbohydrate degradation; L-rhamnose degradation; glycerone phosphate from L-rhamnose: step 2/3. Its function is as follows. Involved in the catabolism of L-rhamnose (6-deoxy-L-mannose). Catalyzes the transfer of the gamma-phosphate group from ATP to the 1-hydroxyl group of L-rhamnulose to yield L-rhamnulose 1-phosphate. The sequence is that of Rhamnulokinase from Escherichia coli O17:K52:H18 (strain UMN026 / ExPEC).